The sequence spans 175 residues: Macro domain-containing protein TTE0995 (175 aa).

The region spanning 1–174 (MKEKIKLIKG…VYSKAYEELD (174 aa)) is the Macro domain.

This sequence belongs to the MacroD-type family.

The protein is Macro domain-containing protein TTE0995 of Caldanaerobacter subterraneus subsp. tengcongensis (strain DSM 15242 / JCM 11007 / NBRC 100824 / MB4) (Thermoanaerobacter tengcongensis).